The sequence spans 424 residues: MSAEIICVGTELLLGDILNGNAQYLAQQLAQLGIPHYHQTVVGDNPDRIKQVIKIAISRANILIFTGGLGPTPDDLTCETIADFFGSPLVESPAIIEDITQKFAQRGRVMTPSNRKQALIPQGADILPNPTGTAPGIIWEPRPNMTIFTFPGVPSEMHRMWEETAVPFLKSQGWGQEIIYSRSLKFWGIGESALAEKVTAYLNLPNPTVAPYAGKGEVRLRVSAKAPSEAAAEALIAPVEKQIKDIAGLDFYGVNNDSLASVVGELLRSSGETLSVAESCTGGLLGQMLTEISGSSDYFWGGVISYDNSVKAGLLGVNSEDLEKLGAVSDTVAEQMAMGVKTRLSTTWGLSITGIAGPDGGTETKPVGLVYIGLAGPGDEVSSFKYNFGTMRVGLRPTVGDRSFIRHLSACTALDLLRRRLLTR.

Belongs to the CinA family.

The protein is CinA-like protein of Nostoc sp. (strain PCC 7120 / SAG 25.82 / UTEX 2576).